A 294-amino-acid chain; its full sequence is Extracellular metalloprotease TRV_07111 (294 aa).

The first 19 residues, 1–19 (MRFSVVFAAIAALSSVVTA), serve as a signal peptide directing secretion. N-linked (GlcNAc...) asparagine glycans are attached at residues Asn49, Asn54, and Asn74. His185 contacts Zn(2+). Residue Glu186 is part of the active site. His189 lines the Zn(2+) pocket. A disulfide bond links Cys224 and Cys250.

The protein belongs to the peptidase M43B family.

Its subcellular location is the secreted. In terms of biological role, secreted metalloproteinase that allows assimilation of proteinaceous substrates. Plays a pivotal role as a pathogenicity determinant during infections and contributes to the ability of the pathogen to persist within the mammalian host. The polypeptide is Extracellular metalloprotease TRV_07111 (Trichophyton verrucosum (strain HKI 0517)).